The sequence spans 25 residues: Antimicrobial peptide THP3 (25 aa).

It localises to the secreted. Its function is as follows. Bactericidal activity; inhibits Staphylococcus aureus. The chain is Antimicrobial peptide THP3 from Meleagris gallopavo (Wild turkey).